The following is an 85-amino-acid chain: Conotoxin Vx15a (85 aa).

Residues 1 to 23 (MEKLTVLILVATVLLTIQVLAQS) form the signal peptide. Residues 24 to 49 (DGDKHLMKRSKQYATKRLSALMRGHR) constitute a propeptide that is removed on maturation. A Pyrrolidone carboxylic acid modification is found at Gln50.

The protein belongs to the conotoxin O2 superfamily. In terms of processing, contains 4 disulfide bonds. Expressed by the venom duct.

The protein resides in the secreted. This Conus vexillum (Flag cone) protein is Conotoxin Vx15a.